A 278-amino-acid chain; its full sequence is Probable velvet family sexual development regulator SCHCODRAFT_28806 (278 aa).

In terms of domain architecture, Velvet spans 51-255; sequence GRTIRASLDE…ARVGVRLSVR (205 aa). The tract at residues 257-278 is disordered; the sequence is TGKKATTKRRKRSDSFDEDDSS.

It belongs to the velvet family.

The protein resides in the nucleus. Functionally, velvet-domain-containing protein that probably acts as a positive regulator of sexual development. This Schizophyllum commune (strain H4-8 / FGSC 9210) (Split gill fungus) protein is Probable velvet family sexual development regulator SCHCODRAFT_28806.